Consider the following 72-residue polypeptide: Aurein-2.2 (72 aa).

Positions 1 to 22 are cleaved as a signal peptide; sequence MAFLKKSLFLVLFLGLVSLSIC. The propeptide occupies 23–49; the sequence is EKEKRQNEEDEDENEAANHEEGSEEKR. Residues 27–47 form a disordered region; sequence RQNEEDEDENEAANHEEGSEE. The segment covering 38–47 has biased composition (basic and acidic residues); the sequence is AANHEEGSEE. Leu-65 carries the post-translational modification Leucine amide. The propeptide occupies 69–72; sequence NDLE.

Amidation is essential for antibacterial activity against Gram-positive bacteria. As to expression, expressed by the skin dorsal glands.

The protein resides in the secreted. The protein localises to the target cell membrane. Functionally, amphipathic alpha-helical antimicrobial peptide with weak to moderate activity against Gram-positive bacteria, and no activity against Gram-negative bacteria. Probably acts by disturbing membrane functions with its amphipathic structure. Strongly inhibits the formation of NO by neuronal nitric oxide synthase (nNOS) at micromolar concentrations. Acts by a non-competitive mechanism, probably by binding to calcium/calmodulin and as a consequence blocking calmodulin attachment to nNOS. The protein is Aurein-2.2 of Ranoidea aurea (Green and golden bell frog).